Reading from the N-terminus, the 336-residue chain is Cytoskeleton protein RodZ (336 aa).

Residues 1-111 lie on the Cytoplasmic side of the membrane; that stretch reads MNTEATHDKT…LGKRRKKRDG (111 aa). An HTH cro/C1-type domain is found at 19–71; that stretch reads LRNAREQLGLSQQAVAERLCLKVSTVRDIEEDKAPADLASTFLRGYIRSYAKL. The H-T-H motif DNA-binding region spans 30–49; sequence QQAVAERLCLKVSTVRDIEE. The helical; Signal-anchor for type II membrane protein transmembrane segment at 112-132 threads the bilayer; that stretch reads WLMSFTWLVLFVVIGLTGAWW. Residues 133 to 336 are Periplasmic-facing; that stretch reads WQNHKAQQEE…TVSAEQSAAQ (204 aa). The segment covering 152–164 has biased composition (low complexity); that stretch reads AALNNSGNNGAQS. The disordered stretch occupies residues 152–235; it reads AALNNSGNNG…TTTGNVNVTQ (84 aa). Polar residues-rich tracts occupy residues 165-190 and 200-217; these read VPLN…TVEP and PDQT…QANV. Over residues 220–235 the composition is skewed to low complexity; it reads APAVTPTTTGNVNVTQ.

Belongs to the RodZ family.

The protein resides in the cell inner membrane. Its function is as follows. Cytoskeletal protein that is involved in cell-shape control through regulation of the length of the long axis. This Enterobacter sp. (strain 638) protein is Cytoskeleton protein RodZ.